Here is a 314-residue protein sequence, read N- to C-terminus: Olfactory receptor 5G9 (314 aa).

The Extracellular segment spans residues 1 to 25 (MADENYTRITEFIFIGLRYHPNLQV). Residue Asn5 is glycosylated (N-linked (GlcNAc...) asparagine). The chain crosses the membrane as a helical span at residues 26–46 (FLFLLFLLFYLVTMTGNLGMI). At 47 to 54 (ILIRVDSR) the chain is on the cytoplasmic side. The chain crosses the membrane as a helical span at residues 55 to 75 (LHTPMYFFLSHLSFVDICFSS). Residues 76 to 99 (VVAPKMLTDFFADKKAISFLGCVL) lie on the Extracellular side of the membrane. Residues Cys97 and Cys189 are joined by a disulfide bond. Residues 100–120 (QQWFFGFFVAIECLLLASMAY) form a helical membrane-spanning segment. At 121–133 (DRYVAICNPLLYS) the chain is on the cytoplasmic side. The helical transmembrane segment at 134–154 (VAMSQRLCIQLVIGPYAVGFF) threads the bilayer. The Extracellular segment spans residues 155–196 (NTMTHTTAAFRLPFCGSNIINHFFCDMSPILSLICADIRINK). The chain crosses the membrane as a helical span at residues 197–217 (LLVFIVAGAVLIVSSTTIIVS). Topologically, residues 218 to 237 (YFHILIAILRIRSAEGRRKA) are cytoplasmic. A helical transmembrane segment spans residues 238–258 (FSTCSSHVTAVSILYGTLFFI). Topologically, residues 259–271 (YVRPSAISSLDLN) are extracellular. The chain crosses the membrane as a helical span at residues 272-292 (KVVSVFYTAVIPMLNPLIYSL). The Cytoplasmic portion of the chain corresponds to 293–314 (RNKEVKSAMGRTVAKAKVFLKN).

It belongs to the G-protein coupled receptor 1 family.

It is found in the cell membrane. Potential odorant receptor. This chain is Olfactory receptor 5G9, found in Mus musculus (Mouse).